Here is a 449-residue protein sequence, read N- to C-terminus: Tubulin alpha-B chain (449 aa).

Positions 11, 71, 140, 144, 145, 179, 206, and 228 each coordinate GTP. Glutamate 71 is a Mg(2+) binding site. The active site involves glutamate 254.

This sequence belongs to the tubulin family. In terms of assembly, dimer of alpha and beta chains. A typical microtubule is a hollow water-filled tube with an outer diameter of 25 nm and an inner diameter of 15 nM. Alpha-beta heterodimers associate head-to-tail to form protofilaments running lengthwise along the microtubule wall with the beta-tubulin subunit facing the microtubule plus end conferring a structural polarity. Microtubules usually have 13 protofilaments but different protofilament numbers can be found in some organisms and specialized cells. Mg(2+) serves as cofactor.

Its subcellular location is the cytoplasm. It is found in the cytoskeleton. The enzyme catalyses GTP + H2O = GDP + phosphate + H(+). Its function is as follows. Tubulin is the major constituent of microtubules, a cylinder consisting of laterally associated linear protofilaments composed of alpha- and beta-tubulin heterodimers. Microtubules grow by the addition of GTP-tubulin dimers to the microtubule end, where a stabilizing cap forms. Below the cap, tubulin dimers are in GDP-bound state, owing to GTPase activity of alpha-tubulin. The chain is Tubulin alpha-B chain (tba-2) from Neurospora crassa (strain ATCC 24698 / 74-OR23-1A / CBS 708.71 / DSM 1257 / FGSC 987).